The primary structure comprises 504 residues: Maturase K (504 aa).

It belongs to the intron maturase 2 family. MatK subfamily.

The protein resides in the plastid. It is found in the chloroplast. Its function is as follows. Usually encoded in the trnK tRNA gene intron. Probably assists in splicing its own and other chloroplast group II introns. In Lobularia maritima (Sweet alyssum), this protein is Maturase K.